The sequence spans 163 residues: Xanthine-guanine phosphoribosyltransferase (163 aa).

5-phospho-alpha-D-ribose 1-diphosphate contacts are provided by residues 43-44 and 95-103; these read RG and DDLVDTGGT. Mg(2+) is bound at residue Asp-96. Asp-99 and Ile-142 together coordinate guanine. Positions 99 and 142 each coordinate xanthine. Residues 99–103 and 141–142 each bind GMP; these read DTGGT and WI.

This sequence belongs to the purine/pyrimidine phosphoribosyltransferase family. XGPT subfamily. Homotetramer. Mg(2+) serves as cofactor.

The protein localises to the cell inner membrane. The catalysed reaction is GMP + diphosphate = guanine + 5-phospho-alpha-D-ribose 1-diphosphate. It carries out the reaction XMP + diphosphate = xanthine + 5-phospho-alpha-D-ribose 1-diphosphate. It catalyses the reaction IMP + diphosphate = hypoxanthine + 5-phospho-alpha-D-ribose 1-diphosphate. The protein operates within purine metabolism; GMP biosynthesis via salvage pathway; GMP from guanine: step 1/1. Its pathway is purine metabolism; XMP biosynthesis via salvage pathway; XMP from xanthine: step 1/1. Functionally, purine salvage pathway enzyme that catalyzes the transfer of the ribosyl-5-phosphate group from 5-phospho-alpha-D-ribose 1-diphosphate (PRPP) to the N9 position of the 6-oxopurines guanine and xanthine to form the corresponding ribonucleotides GMP (guanosine 5'-monophosphate) and XMP (xanthosine 5'-monophosphate), with the release of PPi. To a lesser extent, also acts on hypoxanthine. The protein is Xanthine-guanine phosphoribosyltransferase of Nitratidesulfovibrio vulgaris (strain DP4) (Desulfovibrio vulgaris).